Here is a 498-residue protein sequence, read N- to C-terminus: Guanosine-5'-triphosphate,3'-diphosphate pyrophosphatase (498 aa).

The protein belongs to the GppA/Ppx family. GppA subfamily.

It catalyses the reaction guanosine 3'-diphosphate 5'-triphosphate + H2O = guanosine 3',5'-bis(diphosphate) + phosphate + H(+). It functions in the pathway purine metabolism; ppGpp biosynthesis; ppGpp from GTP: step 2/2. In terms of biological role, catalyzes the conversion of pppGpp to ppGpp. Guanosine pentaphosphate (pppGpp) is a cytoplasmic signaling molecule which together with ppGpp controls the 'stringent response', an adaptive process that allows bacteria to respond to amino acid starvation, resulting in the coordinated regulation of numerous cellular activities. The chain is Guanosine-5'-triphosphate,3'-diphosphate pyrophosphatase from Yersinia enterocolitica serotype O:8 / biotype 1B (strain NCTC 13174 / 8081).